The primary structure comprises 395 residues: Putative nickel insertion protein (395 aa).

Belongs to the LarC family.

The protein is Putative nickel insertion protein of Roseiflexus castenholzii (strain DSM 13941 / HLO8).